The primary structure comprises 341 residues: Nicotinate-nucleotide--dimethylbenzimidazole phosphoribosyltransferase (341 aa).

The active-site Proton acceptor is the Glu310.

This sequence belongs to the CobT family.

It carries out the reaction 5,6-dimethylbenzimidazole + nicotinate beta-D-ribonucleotide = alpha-ribazole 5'-phosphate + nicotinate + H(+). It participates in nucleoside biosynthesis; alpha-ribazole biosynthesis; alpha-ribazole from 5,6-dimethylbenzimidazole: step 1/2. Its function is as follows. Catalyzes the synthesis of alpha-ribazole-5'-phosphate from nicotinate mononucleotide (NAMN) and 5,6-dimethylbenzimidazole (DMB). The polypeptide is Nicotinate-nucleotide--dimethylbenzimidazole phosphoribosyltransferase (Vibrio cholerae serotype O1 (strain ATCC 39315 / El Tor Inaba N16961)).